A 138-amino-acid chain; its full sequence is 16 kDa phloem protein 2 (138 aa).

Residues 1–108 form the C2 domain; sequence MGMGMMEVHL…LAEGVRKGWS (108 aa). Positions 20, 27, 78, 80, and 86 each coordinate Ca(2+).

Ca(2+) serves as cofactor. Sieve elements of leaves, stems, roots and flowers.

In terms of biological role, binds to both sense and antisense RNA. Interacts with mesophyll plasmodesmata to mediate its own cell-to-cell transport and potentiate RNA trafficking. The sequence is that of 16 kDa phloem protein 2 (PP16-2) from Cucurbita maxima (Pumpkin).